Consider the following 262-residue polypeptide: DNA repair protein RecO (262 aa).

Belongs to the RecO family.

Functionally, involved in DNA repair and RecF pathway recombination. The polypeptide is DNA repair protein RecO (Enterococcus faecalis (strain ATCC 700802 / V583)).